The chain runs to 708 residues: Caprin-1 (708 aa).

Low complexity-rich tracts occupy residues 1-15 (MPSA…SKSS) and 22-37 (GSSG…APAS). The interval 1-48 (MPSATSHSGSGSKSSGPPPPSGSSGNEAGAGAAAPASQHPMTGTGAVQ) is disordered. At P2 the chain carries N-acetylproline. Position 10 is a phosphoserine (S10). Positions 58 to 92 (VIDKKLRNLEKKKGKLDDYQERMNKGERLNQDQLD) form a coiled coil. Phosphoserine is present on S113. Residues 123-151 (KTIKKTARREQLMREEAEQKRLKTVLELQ) adopt a coiled-coil conformation. An Omega-N-methylarginine modification is found at R163. The interval 258 to 287 (EEAASAPTVEDQAAEAEPEPVEEYTEQNEV) is disordered. A compositionally biased stretch (acidic residues) spans 269 to 287 (QAAEAEPEPVEEYTEQNEV). 2 positions are modified to phosphoserine: S333 and S341. Residues 358–379 (QDLMAQMQGPYNFIQDSMLDFE) are G3BP1-binding. Over residues 415–452 (LAQPNQVSVQPEATQVPLVSSTSEGYTASQPLYQPSHA) the composition is skewed to polar residues. Disordered stretches follow at residues 415 to 459 (LAQP…RPQK), 473 to 497 (TDQT…GTSK), 521 to 559 (NAPV…QTEL), and 571 to 708 (YHGS…QQVN). Low complexity-rich tracts occupy residues 475–489 (QTTA…SQPQ) and 535–559 (QQNQ…QTEL). Residues 572–603 (HGSQDQPHQVTGNHQQPPQQNTGFPRSNQPYY) are compositionally biased toward polar residues. Position 623 is a phosphotyrosine (Y623). Omega-N-methylarginine occurs at positions 624 and 631. Y634 and Y637 each carry phosphotyrosine. R638 is subject to Omega-N-methylarginine. A compositionally biased stretch (polar residues) spans 640–656 (SFSTNTPNSGYTQSQFS). S642 and S648 each carry an O-linked (GlcNAc) serine glycan. Phosphotyrosine occurs at positions 650, 661, 664, and 669. Low complexity-rich tracts occupy residues 675–685 (RGSGQSGPRGA) and 696–708 (NRGM…QQVN). R697 is subject to Asymmetric dimethylarginine; alternate. An Omega-N-methylarginine; alternate modification is found at R697.

The protein belongs to the caprin family. May form homomultimers. Interacts with G3BP1; interaction is direct and promotes stress granule formation. Interacts with G3BP2; interaction is direct and promotes stress granule formation. Interacts with PQBP1. Interacts with DDX3X. Interacts (when phosphorylated by EPHA4) with FMR1; interaction with FMR1 promotes formation of a membraneless compartment. Tyrosine phosphorylation by EPHA4 promotes interaction with FMR1 and liquid-liquid phase separation (LLPS) for the formation of a membraneless compartment that concentrates mRNAs with associated regulatory factors. In terms of processing, O-glycosylated (O-GlcNAcylated), in a cell cycle-dependent manner. O-glycosylation by OGT inhibit ability to undergo liquid-liquid phase separation (LLPS).

It localises to the cytoplasm. The protein localises to the cytoplasmic ribonucleoprotein granule. The protein resides in the cytosol. It is found in the cell projection. Its subcellular location is the dendrite. It localises to the lamellipodium. With respect to regulation, ability to mediate liquid-liquid phase separation is regulated by ATP: moderate concentrations of ATP enhance phase separation, whereas high concentrations of ATP lead to inhibition of phase separation. Its function is as follows. mRNA-binding protein that acts as a regulator of mRNAs transport, translation and/or stability, and which is involved in neurogenesis, synaptic plasticity in neurons and cell proliferation and migration in multiple cell types. Plays an essential role in cytoplasmic stress granule formation. Acts as an mRNA regulator by mediating formation of some phase-separated membraneless compartment: undergoes liquid-liquid phase separation upon binding to target mRNAs, leading to assemble mRNAs into cytoplasmic ribonucleoprotein granules that concentrate mRNAs with associated regulatory factors. Undergoes liquid-liquid phase separation following phosphorylation and interaction with FMR1, promoting formation of cytoplasmic ribonucleoprotein granules that concentrate mRNAs with factors that inhibit translation and mediate deadenylation of target mRNAs. In these cytoplasmic ribonucleoprotein granules, CAPRIN1 mediates recruitment of CNOT7 deadenylase, leading to mRNA deadenylation and degradation. Binds directly and selectively to MYC and CCND2 mRNAs. In neuronal cells, directly binds to several mRNAs associated with RNA granules, including BDNF, CAMK2A, CREB1, MAP2, NTRK2 mRNAs, as well as to GRIN1 and KPNB1 mRNAs, but not to rRNAs. This is Caprin-1 (CAPRIN1) from Bos taurus (Bovine).